Consider the following 213-residue polypeptide: Probable GTP-binding protein EngB (213 aa).

The region spanning 30–204 (EGFEVAFAGR…YTALAGWMEL (175 aa)) is the EngB-type G domain. Residues 38 to 45 (GRSNAGKS), 64 to 68 (GRTQL), 82 to 85 (DLPG), 149 to 152 (TKAD), and 182 to 185 (LFSA) contribute to the GTP site. 2 residues coordinate Mg(2+): Ser45 and Thr66.

This sequence belongs to the TRAFAC class TrmE-Era-EngA-EngB-Septin-like GTPase superfamily. EngB GTPase family. Requires Mg(2+) as cofactor.

Functionally, necessary for normal cell division and for the maintenance of normal septation. In Pseudomonas fluorescens (strain SBW25), this protein is Probable GTP-binding protein EngB.